The sequence spans 545 residues: Chaperonin GroEL (545 aa).

Residues 30–33 (TLGP), Lys51, 87–91 (DGTTT), Gly415, 479–481 (NAA), and Asp495 contribute to the ATP site. The interval 526-545 (KDDAPAPAMPDMGGMGGMGM) is disordered.

Belongs to the chaperonin (HSP60) family. As to quaternary structure, forms a cylinder of 14 subunits composed of two heptameric rings stacked back-to-back. Interacts with the co-chaperonin GroES.

The protein resides in the cytoplasm. It catalyses the reaction ATP + H2O + a folded polypeptide = ADP + phosphate + an unfolded polypeptide.. In terms of biological role, together with its co-chaperonin GroES, plays an essential role in assisting protein folding. The GroEL-GroES system forms a nano-cage that allows encapsulation of the non-native substrate proteins and provides a physical environment optimized to promote and accelerate protein folding. The sequence is that of Chaperonin GroEL from Paracidovorax citrulli (strain AAC00-1) (Acidovorax citrulli).